Here is a 189-residue protein sequence, read N- to C-terminus: Protein jagunal homolog (189 aa).

The Cytoplasmic portion of the chain corresponds to 1-34 (MSSRGVRAAGTDGTDFQNRQRVAQHYQESAQYKS). Residues 35 to 55 (ILKWFFVPHFLILVFMWLKVG) form a helical membrane-spanning segment. Residues 56–78 (SELLRTNFGWKNAFFDRLDMPSA) are Lumenal-facing. Residues 79 to 99 (YPWEYVWCFSFIPIVLAIYSF) form a helical membrane-spanning segment. Residues 100 to 105 (QRNKLK) lie on the Cytoplasmic side of the membrane. The helical transmembrane segment at 106 to 126 (ILHYAYYAEFVVGIFPCMIGL) threads the bilayer. At 127 to 150 (GGQLPELMEYAQDMEGSNTPTFKG) the chain is on the lumenal side. Residues 151–171 (IFPMVIIWYIFFAVALQIHGF) traverse the membrane as a helical segment. The Cytoplasmic segment spans residues 172–189 (SMYFMHHLAAAWAPVKRD).

It belongs to the jagunal family.

It localises to the endoplasmic reticulum membrane. This chain is Protein jagunal homolog, found in Caenorhabditis elegans.